The primary structure comprises 262 residues: Nurim (262 aa).

The Nuclear segment spans residues Met1–Ala4. The chain crosses the membrane as a helical span at residues Leu5–Phe28. Residues Thr29–Ser58 lie on the Perinuclear space side of the membrane. Residues Ile59 to Met80 traverse the membrane as a helical segment. At Ala81–Gln97 the chain is on the nuclear side. Residues Arg98–Arg114 form a helical membrane-spanning segment. Residues Tyr115–Trp133 lie on the Perinuclear space side of the membrane. Residues Ala134–Leu164 form a helical membrane-spanning segment. Over Met165–Leu191 the chain is Nuclear. The chain crosses the membrane as a helical span at residues Phe192–Val210. Topologically, residues Pro211–Asp216 are perinuclear space. A helical membrane pass occupies residues Arg217–Leu234. Topologically, residues Asp235–Glu262 are nuclear.

Belongs to the nurim family.

Its subcellular location is the nucleus inner membrane. The polypeptide is Nurim (NRM) (Sus scrofa (Pig)).